The chain runs to 330 residues: NADH-quinone oxidoreductase subunit H (330 aa).

8 helical membrane passes run 5–25 (LLTL…VLTL), 78–98 (WVFM…FAVI), 120–140 (IGLL…ALGG), 155–175 (AMAQ…PVVM), 191–211 (SLPN…AIMA), 243–263 (FFVG…VLFL), 271–291 (LPGI…FIWV), and 308–328 (WKIL…WLIW).

Belongs to the complex I subunit 1 family. NDH-1 is composed of 14 different subunits. Subunits NuoA, H, J, K, L, M, N constitute the membrane sector of the complex.

The protein localises to the cell inner membrane. The catalysed reaction is a quinone + NADH + 5 H(+)(in) = a quinol + NAD(+) + 4 H(+)(out). Its function is as follows. NDH-1 shuttles electrons from NADH, via FMN and iron-sulfur (Fe-S) centers, to quinones in the respiratory chain. The immediate electron acceptor for the enzyme in this species is believed to be ubiquinone. Couples the redox reaction to proton translocation (for every two electrons transferred, four hydrogen ions are translocated across the cytoplasmic membrane), and thus conserves the redox energy in a proton gradient. This subunit may bind ubiquinone. The protein is NADH-quinone oxidoreductase subunit H of Syntrophotalea carbinolica (strain DSM 2380 / NBRC 103641 / GraBd1) (Pelobacter carbinolicus).